The primary structure comprises 106 residues: MDTSGPAAFVNGEILKMFVGRRVRTVVQAQREEGGLLIGQSTDGHQLTIKGASGAPMSHYVEIIGIAEPNQAIRAEVCTDFGENFDPAPFNGLCKLANGQMKDLFL.

This sequence belongs to the replication factor A protein 3 family. In terms of assembly, component of the heterotrimeric canonical replication protein A complex (RPA). Interacts with RPA1B, RPA2A, RPA2B and RPA2C.

Its subcellular location is the nucleus. As part of the replication protein A (RPA/RP-A), a single-stranded DNA-binding heterotrimeric complex, may play an essential role in DNA replication, recombination and repair. Binds and stabilizes single-stranded DNA intermediates, preventing complementary DNA reannealing and recruiting different proteins involved in DNA metabolism. This is Replication protein A 14 kDa subunit (RPA3) from Oryza sativa subsp. japonica (Rice).